Reading from the N-terminus, the 236-residue chain is MLHSPVFPAFGHHLAQHPAMPLAMELPRTPKASFNIDSILSRTDRPASKLSMEMPSWQPPSPPSMPYRYSYGMMPYPPVWLIKPTVGYPNMAQQQPMRMPRGECLCPDPTCKERVLPFSHCPNGAMNPLSWRTGPCKMKRIRTVFTPEQLEKLEKEFLKQQYMVGTERVDLASTLNLTETQVKVWFQNRRIKWRKQSLEQKKAKLSQFGVIPADSSDHTDDSRETEEDEDDLDVEL.

Positions 138–197 (MKRIRTVFTPEQLEKLEKEFLKQQYMVGTERVDLASTLNLTETQVKVWFQNRRIKWRKQS) form a DNA-binding region, homeobox. The disordered stretch occupies residues 209–236 (GVIPADSSDHTDDSRETEEDEDDLDVEL). The span at 223–236 (RETEEDEDDLDVEL) shows a compositional bias: acidic residues.

Expressed throughout the embryo during pre-gastrula stages. Localized to the dorsal lip of the blastopore (Spemann organizer) during early gastrulation, after which expression continues in tissues derived from the organizer. Expressed in the notochord during mid-gastrulation. During neurulation, expressed in the notochord, archenteron roof and the prospective floor plate. Also expressed in the region that will become the epiphysis, the pineal body precursor. By the early tailbud stages, expression is limited to posterior notochord and floor plate before becoming restricted to the tip of the tail in the tadpole.

It localises to the nucleus. In terms of biological role, transcriptional repressor. Plays a fundamental role in notochord formation, acting within the mesodermal region. The chain is Homeobox protein notochord (noto) from Xenopus laevis (African clawed frog).